The sequence spans 264 residues: 3'-5' ssDNA/RNA exonuclease TatD (264 aa).

The a divalent metal cation site is built by Glu92, His128, and His153.

This sequence belongs to the metallo-dependent hydrolases superfamily. TatD-type hydrolase family. TatD subfamily. As to quaternary structure, monomer. The cofactor is Mg(2+).

It localises to the cytoplasm. In terms of biological role, 3'-5' exonuclease that prefers single-stranded DNA and RNA. May play a role in the H(2)O(2)-induced DNA damage repair. In Dickeya dadantii (strain 3937) (Erwinia chrysanthemi (strain 3937)), this protein is 3'-5' ssDNA/RNA exonuclease TatD.